The primary structure comprises 247 residues: Putative 2-succinyl-6-hydroxy-2,4-cyclohexadiene-1-carboxylate synthase (247 aa).

The AB hydrolase-1 domain maps to 4-229 (IIFLHGLLGT…CAGHNSHLEN (226 aa)).

The protein belongs to the AB hydrolase superfamily. MenH family. As to quaternary structure, monomer.

The enzyme catalyses 5-enolpyruvoyl-6-hydroxy-2-succinyl-cyclohex-3-ene-1-carboxylate = (1R,6R)-6-hydroxy-2-succinyl-cyclohexa-2,4-diene-1-carboxylate + pyruvate. It functions in the pathway quinol/quinone metabolism; 1,4-dihydroxy-2-naphthoate biosynthesis; 1,4-dihydroxy-2-naphthoate from chorismate: step 3/7. The protein operates within quinol/quinone metabolism; menaquinone biosynthesis. Its function is as follows. Catalyzes a proton abstraction reaction that results in 2,5-elimination of pyruvate from 2-succinyl-5-enolpyruvyl-6-hydroxy-3-cyclohexene-1-carboxylate (SEPHCHC) and the formation of 2-succinyl-6-hydroxy-2,4-cyclohexadiene-1-carboxylate (SHCHC). The polypeptide is Putative 2-succinyl-6-hydroxy-2,4-cyclohexadiene-1-carboxylate synthase (Haemophilus influenzae (strain ATCC 51907 / DSM 11121 / KW20 / Rd)).